A 564-amino-acid polypeptide reads, in one-letter code: Heat shock factor protein 2 (564 aa).

The DNA-binding element occupies Val21–Ser126. The segment at Asn133–Val206 is hydrophobic repeat HR-A/B. Acidic residues predominate over residues Glu271–Asn280. 2 disordered regions span residues Glu271 to Ser301 and Gln320 to Met347. The segment at Leu390–Ile415 is hydrophobic repeat HR-C. Polar residues predominate over residues Thr448 to Lys465. Positions Thr448–Ser468 are disordered.

Belongs to the HSF family. As to quaternary structure, homotrimer. As to expression, expressed in most tissues with the exceptions of blood and liver.

The protein resides in the cytoplasm. It localises to the nucleus. Functionally, DNA-binding protein that specifically binds heat shock promoter elements (HSE) and activates transcription. HSF2 shows constitutive DNA binding activity, even without heat shock. This Gallus gallus (Chicken) protein is Heat shock factor protein 2 (HSF2).